Reading from the N-terminus, the 1211-residue chain is Transient receptor potential cation channel subfamily A member 1 homolog (1211 aa).

At 1–811 the chain is on the cytoplasmic side; it reads MSKKSLGLDV…LKYKWNRLGR (811 aa). ANK repeat units lie at residues 49-79, 83-112, 116-169, 173-202, 206-235, 239-270, 277-306, 311-340, 344-374, 378-407, 411-440, 473-502, 506-535, 540-569, 573-602, 605-634, and 638-669; these read NLRS…AVNA, DFMT…LPNT, EGDT…EIDP, YQLT…DVDA, NKMT…NVTK, RLNT…AIKA, EKKT…KNSC, REKE…NKNE, VKAV…NIDV, QGLT…NLTI, DERT…KKNK, DQNT…SITQ, DEET…RLLL, MGNS…DKEA, YQKT…QIES, DTKT…TIDR, and EGKT…NLMI. The chain crosses the membrane as a helical span at residues 812 to 832; sequence PMYYFALFMYLVFIVSLTQYV. The Extracellular portion of the chain corresponds to 833-870; the sequence is RHTKAPYNVWNEESYYDSEYFDENETCPQINTTKPDVV. 2 N-linked (GlcNAc...) asparagine glycosylation sites follow: asparagine 856 and asparagine 863. The chain crosses the membrane as a helical span at residues 871-891; sequence WKIIIQTLAVCQILVECFQLF. Residues 892–894 are Cytoplasmic-facing; that stretch reads QRK. The chain crosses the membrane as a helical span at residues 895-915; that stretch reads FAYLVNWENWIDCFIYSTALI. Over 916–932 the chain is Extracellular; it reads TVYDFSECSATSGVRQN. The helical transmembrane segment at 933 to 953 threads the bilayer; sequence WQWILAALCIFFGWINLLFMI. The Cytoplasmic segment spans residues 954-975; the sequence is RKMPRFGIFVVMFVDIVKTFFR. A helical transmembrane segment spans residues 976–996; sequence FFPVFVLFIIAFSSSFYVILQ. Residues 997 to 1004 lie on the Extracellular side of the membrane; it reads NRPEFSTI. Residues 1005 to 1025 constitute an intramembrane region (pore-forming); the sequence is FMSPLKTTVMMIGEFEFTGIF. The Extracellular segment spans residues 1026–1048; the sequence is HGDETTHAEKMFGPAHTAVACAL. The helical transmembrane segment at 1049 to 1069 threads the bilayer; that stretch reads FFFFCIIMTILLMNLLVGLAV. Residues 1070–1193 lie on the Cytoplasmic side of the membrane; it reads DDIKGVQEKA…EKQVRLEAII (124 aa). Residues 1149–1191 are a coiled coil; that stretch reads EMYEREAEFTSEMTQKLQNQAAKLKNIQENIDVMYEKQVRLEA.

It belongs to the transient receptor (TC 1.A.4) family. In terms of assembly, homotetramer. Expressed in many sensory neurons, including OLQ and IL1 neurons.

It is found in the cell membrane. In terms of biological role, receptor-activated non-selective cation channel involved in the nose-touch response and foraging behavior. Contributes to the neural responses of sensory neurons to touch, particularly after repeated mechanical stimulation. Has no apparent role in thermosensory or chemosensory behaviors. This is Transient receptor potential cation channel subfamily A member 1 homolog (trpa-1) from Caenorhabditis elegans.